The chain runs to 100 residues: Urease subunit gamma (100 aa).

This sequence belongs to the urease gamma subunit family. Heterotrimer of UreA (gamma), UreB (beta) and UreC (alpha) subunits. Three heterotrimers associate to form the active enzyme.

It is found in the cytoplasm. The enzyme catalyses urea + 2 H2O + H(+) = hydrogencarbonate + 2 NH4(+). It functions in the pathway nitrogen metabolism; urea degradation; CO(2) and NH(3) from urea (urease route): step 1/1. This Lachnoclostridium phytofermentans (strain ATCC 700394 / DSM 18823 / ISDg) (Clostridium phytofermentans) protein is Urease subunit gamma.